We begin with the raw amino-acid sequence, 150 residues long: Lipoprotein signal peptidase (150 aa).

2 consecutive transmembrane segments (helical) span residues 58 to 78 (FFII…FKST) and 85 to 107 (SFSL…GYVV). Residues Asp108 and Asp122 contribute to the active site. The chain crosses the membrane as a helical span at residues 117-137 (VFNLADFFITGGVLLLTFLIL).

It belongs to the peptidase A8 family.

It is found in the cell membrane. It carries out the reaction Release of signal peptides from bacterial membrane prolipoproteins. Hydrolyzes -Xaa-Yaa-Zaa-|-(S,diacylglyceryl)Cys-, in which Xaa is hydrophobic (preferably Leu), and Yaa (Ala or Ser) and Zaa (Gly or Ala) have small, neutral side chains.. Its pathway is protein modification; lipoprotein biosynthesis (signal peptide cleavage). Its function is as follows. This protein specifically catalyzes the removal of signal peptides from prolipoproteins. The sequence is that of Lipoprotein signal peptidase from Caldicellulosiruptor bescii (strain ATCC BAA-1888 / DSM 6725 / KCTC 15123 / Z-1320) (Anaerocellum thermophilum).